Consider the following 351-residue polypeptide: MKKSTLALVVMGITASASVQAAEVYNKNGNKLDLYGKVKAMHYMTDYDSKDGDQSYIRLGFKGETQINDELTGYGRWEAEFAGNKAESDSNQQKTRLAFAGSKLKNLGSFDYGRNLGALYDVEAWTDMFPEFGGDSSAQTDNFMTKRASGLATYRNTDFFGVVDGLDLTLQYQGKNQDRDVKKQNGDGFGTSVTYDFGGSDFAVSGAYTNSDRTNQQNLQTRGTGDKAEAWATGLKYDANDIYIATFYSETRNMTPISGGFANKTQNFEAVVQYQFDFGLRPSLGYVLSKGKDIEGVGNEDLVNYIDVGATYYFNKNMSAFVDYKINQLDSDNKLGINNDDIVAVGMVYQF.

The first 21 residues, 1–21 (MKKSTLALVVMGITASASVQA), serve as a signal peptide directing secretion.

It belongs to the Gram-negative porin family. Homotrimer.

Its subcellular location is the cell outer membrane. Uptake of inorganic phosphate, phosphorylated compounds, and some other negatively charged solutes. The polypeptide is Outer membrane porin PhoE (phoE) (Citrobacter freundii).